The chain runs to 148 residues: MNITQVKIKKLENFSGSLPEYATEHSAGMDLIAANEQPITIKAGEIQLIPTGIAIALPYSFEAQIRPRSGLAVKHGITVANSPGTIDADYRGEIKVILINLGTQDFVIEKGMRIAQIIISKYERILWEESSILTETMRGSGGFGSTGV.

Residues Arg-68–Gly-70, Asn-81, Thr-85–Asp-87, and Lys-95 contribute to the substrate site.

The protein belongs to the dUTPase family. Requires Mg(2+) as cofactor.

It carries out the reaction dUTP + H2O = dUMP + diphosphate + H(+). It participates in pyrimidine metabolism; dUMP biosynthesis; dUMP from dCTP (dUTP route): step 2/2. Its function is as follows. This enzyme is involved in nucleotide metabolism: it produces dUMP, the immediate precursor of thymidine nucleotides and it decreases the intracellular concentration of dUTP so that uracil cannot be incorporated into DNA. The chain is Deoxyuridine 5'-triphosphate nucleotidohydrolase from Rickettsia akari (strain Hartford).